The chain runs to 153 residues: Small ribosomal subunit protein bS16 (153 aa).

Belongs to the bacterial ribosomal protein bS16 family.

The protein is Small ribosomal subunit protein bS16 of Leifsonia xyli subsp. xyli (strain CTCB07).